We begin with the raw amino-acid sequence, 267 residues long: Regulatory protein RecX (267 aa).

This sequence belongs to the RecX family.

The protein resides in the cytoplasm. Modulates RecA activity. The sequence is that of Regulatory protein RecX from Staphylococcus haemolyticus (strain JCSC1435).